The sequence spans 118 residues: Co-chaperonin GroES (118 aa).

It belongs to the GroES chaperonin family. As to quaternary structure, heptamer of 7 subunits arranged in a ring. Interacts with the chaperonin GroEL.

The protein resides in the cytoplasm. In terms of biological role, together with the chaperonin GroEL, plays an essential role in assisting protein folding. The GroEL-GroES system forms a nano-cage that allows encapsulation of the non-native substrate proteins and provides a physical environment optimized to promote and accelerate protein folding. GroES binds to the apical surface of the GroEL ring, thereby capping the opening of the GroEL channel. The protein is Co-chaperonin GroES of Helicobacter pylori (strain G27).